A 291-amino-acid polypeptide reads, in one-letter code: 33 kDa chaperonin (291 aa).

2 disulfide bridges follow: cysteine 237/cysteine 239 and cysteine 270/cysteine 273.

It belongs to the HSP33 family. Post-translationally, under oxidizing conditions two disulfide bonds are formed involving the reactive cysteines. Under reducing conditions zinc is bound to the reactive cysteines and the protein is inactive.

Its subcellular location is the cytoplasm. Functionally, redox regulated molecular chaperone. Protects both thermally unfolding and oxidatively damaged proteins from irreversible aggregation. Plays an important role in the bacterial defense system toward oxidative stress. This chain is 33 kDa chaperonin, found in Clostridioides difficile (strain 630) (Peptoclostridium difficile).